The sequence spans 342 residues: tRNA N6-adenosine threonylcarbamoyltransferase (342 aa).

The Fe cation site is built by histidine 111 and histidine 115. Substrate contacts are provided by residues 134-138 (LVSGG), aspartate 167, glycine 180, and asparagine 275. Aspartate 303 contributes to the Fe cation binding site.

This sequence belongs to the KAE1 / TsaD family. Fe(2+) is required as a cofactor.

The protein localises to the cytoplasm. It carries out the reaction L-threonylcarbamoyladenylate + adenosine(37) in tRNA = N(6)-L-threonylcarbamoyladenosine(37) in tRNA + AMP + H(+). Required for the formation of a threonylcarbamoyl group on adenosine at position 37 (t(6)A37) in tRNAs that read codons beginning with adenine. Is involved in the transfer of the threonylcarbamoyl moiety of threonylcarbamoyl-AMP (TC-AMP) to the N6 group of A37, together with TsaE and TsaB. TsaD likely plays a direct catalytic role in this reaction. The sequence is that of tRNA N6-adenosine threonylcarbamoyltransferase from Paraburkholderia xenovorans (strain LB400).